The following is a 73-amino-acid chain: UPF0435 protein OB1527 (73 aa).

The protein belongs to the UPF0435 family.

This Oceanobacillus iheyensis (strain DSM 14371 / CIP 107618 / JCM 11309 / KCTC 3954 / HTE831) protein is UPF0435 protein OB1527.